A 147-amino-acid polypeptide reads, in one-letter code: Riboflavin kinase (147 aa).

15-20 (GLGEGR) is a binding site for CDP. Residues Thr44 and Asn46 each coordinate Mg(2+). The FMN site is built by Thr97 and Glu104. 109-112 (TELR) contributes to the CDP binding site.

The protein belongs to the archaeal riboflavin kinase family. Mg(2+) is required as a cofactor.

The enzyme catalyses riboflavin + CTP = CDP + FMN + H(+). Its pathway is cofactor biosynthesis; FMN biosynthesis; FMN from riboflavin (CTP route): step 1/1. Catalyzes the CTP-dependent phosphorylation of riboflavin (vitamin B2) to form flavin mononucleotide (FMN). This is Riboflavin kinase from Methanopyrus kandleri (strain AV19 / DSM 6324 / JCM 9639 / NBRC 100938).